We begin with the raw amino-acid sequence, 446 residues long: uncharacterized protein (446 aa).

A run of 4 helical transmembrane segments spans residues 69 to 89 (FWLW…VTYL), 98 to 118 (FFLV…VWLA), 169 to 189 (HSLW…LLLV), and 247 to 267 (GLLV…AWVV).

The protein localises to the membrane. This is an uncharacterized protein from Neisseria meningitidis serogroup B (strain ATCC BAA-335 / MC58).